The following is a 371-amino-acid chain: UDP-N-acetylglucosamine--N-acetylmuramyl-(pentapeptide) pyrophosphoryl-undecaprenol N-acetylglucosamine transferase (371 aa).

UDP-N-acetyl-alpha-D-glucosamine contacts are provided by residues 15-17 (TGG), Asn126, Arg169, Ser197, and Gln298.

It belongs to the glycosyltransferase 28 family. MurG subfamily.

The protein localises to the cell inner membrane. It catalyses the reaction di-trans,octa-cis-undecaprenyl diphospho-N-acetyl-alpha-D-muramoyl-L-alanyl-D-glutamyl-meso-2,6-diaminopimeloyl-D-alanyl-D-alanine + UDP-N-acetyl-alpha-D-glucosamine = di-trans,octa-cis-undecaprenyl diphospho-[N-acetyl-alpha-D-glucosaminyl-(1-&gt;4)]-N-acetyl-alpha-D-muramoyl-L-alanyl-D-glutamyl-meso-2,6-diaminopimeloyl-D-alanyl-D-alanine + UDP + H(+). It participates in cell wall biogenesis; peptidoglycan biosynthesis. Functionally, cell wall formation. Catalyzes the transfer of a GlcNAc subunit on undecaprenyl-pyrophosphoryl-MurNAc-pentapeptide (lipid intermediate I) to form undecaprenyl-pyrophosphoryl-MurNAc-(pentapeptide)GlcNAc (lipid intermediate II). This chain is UDP-N-acetylglucosamine--N-acetylmuramyl-(pentapeptide) pyrophosphoryl-undecaprenol N-acetylglucosamine transferase, found in Paramagnetospirillum magneticum (strain ATCC 700264 / AMB-1) (Magnetospirillum magneticum).